Reading from the N-terminus, the 715-residue chain is MGSHPITQDNDLDPPTEPGERYFNRELSWLAFNDRVLAEACNDSYPLLERLRFLSISGSNLDEFVMIRVAGLVGQVQRGIDEVSDDGRSPREQLNAVVARLEELSERQQDIWRNLRVQLADAGVHVADEERVNAEAYGWLKQHFFESILPLLTPQALDPAHPFPFISNEGLGLLFTLRRGGEELVEMVLIPSALPRFIRVPGEDALYISIESLITRFAKELFPGFEIVGDGTFRVLRDSDIEIQEEAEDLVRTFRSAIQRRRRGQVIQLEIEEEFDPTAEALLREKLDTPGATFVKTDGMLGIAGLADIVDEDRPDLKFDSYSPRYPERVLEHDGDIFAAIREKDIVIHHPYESFNVVVDFIRRAAIDPDVVAIKQALYRAGTQSEVVDALVEAAENGKSVTAVVELKARFDEEQNLYWANKLERAGVQVIYGFVDWKTHAKVAMVVRREEEGFRTYCHFGTGNYHPITAKIYTDLSYFTADPRLGRDAAKLFNFVTGYVEPRELEMLAVSPIDLRETIYAAIDNEMVNAQAGKPAAIWMKMNQITDVDMIDRLYEASQAGVEIQLVVRGICNLRPGVPGMSDNIRVKSIIGRFLEHSRIYAFANGEPMPGTSSTVYISSADLMVRNLDRRVEQLVPIDNQTVHDQVLQQVLLANLLDNEQSWELQPDGSYFRVEVGEKSFNCHRYFMTNPSLSGRGGALEAGAVPKLALRKGAV.

N60 is an ATP binding site. Positions 380 and 410 each coordinate Mg(2+). Residue H440 is the Phosphohistidine intermediate of the active site. ATP-binding residues include Y473, R569, and H597.

This sequence belongs to the polyphosphate kinase 1 (PPK1) family. Mg(2+) serves as cofactor. Post-translationally, an intermediate of this reaction is the autophosphorylated ppk in which a phosphate is covalently linked to a histidine residue through a N-P bond.

The enzyme catalyses [phosphate](n) + ATP = [phosphate](n+1) + ADP. Its function is as follows. Catalyzes the reversible transfer of the terminal phosphate of ATP to form a long-chain polyphosphate (polyP). This chain is Polyphosphate kinase, found in Erythrobacter litoralis (strain HTCC2594).